Here is a 145-residue protein sequence, read N- to C-terminus: Protein FAM216B (145 aa).

The interval 92–121 is disordered; sequence TKRASAKAGPHRTVPQRAAGRTRTQPSARP.

The protein belongs to the FAM216 family.

In Bos taurus (Bovine), this protein is Protein FAM216B (FAM216B).